The primary structure comprises 83 residues: ATP synthase subunit c (83 aa).

2 helical membrane passes run 10–30 (IAVA…FGLL) and 52–72 (MFIV…IALY).

The protein belongs to the ATPase C chain family. In terms of assembly, F-type ATPases have 2 components, F(1) - the catalytic core - and F(0) - the membrane proton channel. F(1) has five subunits: alpha(3), beta(3), gamma(1), delta(1), epsilon(1). F(0) has three main subunits: a(1), b(2) and c(10-14). The alpha and beta chains form an alternating ring which encloses part of the gamma chain. F(1) is attached to F(0) by a central stalk formed by the gamma and epsilon chains, while a peripheral stalk is formed by the delta and b chains.

Its subcellular location is the cell inner membrane. Its function is as follows. F(1)F(0) ATP synthase produces ATP from ADP in the presence of a proton or sodium gradient. F-type ATPases consist of two structural domains, F(1) containing the extramembraneous catalytic core and F(0) containing the membrane proton channel, linked together by a central stalk and a peripheral stalk. During catalysis, ATP synthesis in the catalytic domain of F(1) is coupled via a rotary mechanism of the central stalk subunits to proton translocation. Functionally, key component of the F(0) channel; it plays a direct role in translocation across the membrane. A homomeric c-ring of between 10-14 subunits forms the central stalk rotor element with the F(1) delta and epsilon subunits. In Shewanella amazonensis (strain ATCC BAA-1098 / SB2B), this protein is ATP synthase subunit c.